We begin with the raw amino-acid sequence, 545 residues long: CTP synthase (545 aa).

The interval 1 to 267 is amidoligase domain; the sequence is MTKFIFVTGG…AEQVLNLLQM (267 aa). Serine 13 is a CTP binding site. Residue serine 13 coordinates UTP. ATP contacts are provided by residues 14 to 19 and aspartate 71; that span reads SIGKGI. Residues aspartate 71 and glutamate 141 each contribute to the Mg(2+) site. CTP-binding positions include 148 to 150, 188 to 193, and lysine 224; these read DIE and KTKPTQ. Residues 188–193 and lysine 224 contribute to the UTP site; that span reads KTKPTQ. Residues 292-534 enclose the Glutamine amidotransferase type-1 domain; that stretch reads EIAIVGKYVQ…IQAAIALSLS (243 aa). Glycine 354 serves as a coordination point for L-glutamine. Cysteine 381 serves as the catalytic Nucleophile; for glutamine hydrolysis. Residues 382-385, glutamate 405, and arginine 462 contribute to the L-glutamine site; that span reads LGMQ. Active-site residues include histidine 507 and glutamate 509.

Belongs to the CTP synthase family. In terms of assembly, homotetramer.

It carries out the reaction UTP + L-glutamine + ATP + H2O = CTP + L-glutamate + ADP + phosphate + 2 H(+). It catalyses the reaction L-glutamine + H2O = L-glutamate + NH4(+). The catalysed reaction is UTP + NH4(+) + ATP = CTP + ADP + phosphate + 2 H(+). It functions in the pathway pyrimidine metabolism; CTP biosynthesis via de novo pathway; CTP from UDP: step 2/2. Allosterically activated by GTP, when glutamine is the substrate; GTP has no effect on the reaction when ammonia is the substrate. The allosteric effector GTP functions by stabilizing the protein conformation that binds the tetrahedral intermediate(s) formed during glutamine hydrolysis. Inhibited by the product CTP, via allosteric rather than competitive inhibition. Catalyzes the ATP-dependent amination of UTP to CTP with either L-glutamine or ammonia as the source of nitrogen. Regulates intracellular CTP levels through interactions with the four ribonucleotide triphosphates. The chain is CTP synthase from Nostoc punctiforme (strain ATCC 29133 / PCC 73102).